A 365-amino-acid polypeptide reads, in one-letter code: Peptide chain release factor 2 (365 aa).

N5-methylglutamine is present on Q252.

This sequence belongs to the prokaryotic/mitochondrial release factor family. Post-translationally, methylated by PrmC. Methylation increases the termination efficiency of RF2.

The protein localises to the cytoplasm. Peptide chain release factor 2 directs the termination of translation in response to the peptide chain termination codons UGA and UAA. The sequence is that of Peptide chain release factor 2 from Yersinia enterocolitica serotype O:8 / biotype 1B (strain NCTC 13174 / 8081).